A 256-amino-acid polypeptide reads, in one-letter code: 5-keto-4-deoxy-D-glucarate aldolase (256 aa).

The active-site Proton acceptor is the His-50. Position 151 (Gln-151) interacts with substrate. Glu-153 is a binding site for Mg(2+). The substrate site is built by Ser-178 and Asp-179. Asp-179 lines the Mg(2+) pocket.

This sequence belongs to the HpcH/HpaI aldolase family. KDGluc aldolase subfamily. As to quaternary structure, homohexamer; trimer of dimers. The cofactor is Mg(2+).

The enzyme catalyses 5-dehydro-4-deoxy-D-glucarate = 2-hydroxy-3-oxopropanoate + pyruvate. It catalyses the reaction 2-dehydro-3-deoxy-D-glucarate = 2-hydroxy-3-oxopropanoate + pyruvate. It functions in the pathway carbohydrate acid metabolism; galactarate degradation; D-glycerate from galactarate: step 2/3. Catalyzes the reversible retro-aldol cleavage of both 5-keto-4-deoxy-D-glucarate and 2-keto-3-deoxy-D-glucarate to pyruvate and tartronic semialdehyde. This is 5-keto-4-deoxy-D-glucarate aldolase from Klebsiella pneumoniae subsp. pneumoniae (strain ATCC 700721 / MGH 78578).